The primary structure comprises 321 residues: 4-hydroxy-3-methylbut-2-enyl diphosphate reductase (321 aa).

Cysteine 13 contributes to the [4Fe-4S] cluster binding site. (2E)-4-hydroxy-3-methylbut-2-enyl diphosphate-binding residues include histidine 41 and histidine 75. Dimethylallyl diphosphate-binding residues include histidine 41 and histidine 75. Isopentenyl diphosphate contacts are provided by histidine 41 and histidine 75. [4Fe-4S] cluster is bound at residue cysteine 97. Residue histidine 125 coordinates (2E)-4-hydroxy-3-methylbut-2-enyl diphosphate. Histidine 125 contacts dimethylallyl diphosphate. Residue histidine 125 participates in isopentenyl diphosphate binding. The Proton donor role is filled by glutamate 127. Position 168 (threonine 168) interacts with (2E)-4-hydroxy-3-methylbut-2-enyl diphosphate. Cysteine 225 lines the [4Fe-4S] cluster pocket. Residues serine 253, serine 254, asparagine 255, and serine 302 each coordinate (2E)-4-hydroxy-3-methylbut-2-enyl diphosphate. Serine 253, serine 254, asparagine 255, and serine 302 together coordinate dimethylallyl diphosphate. Residues serine 253, serine 254, asparagine 255, and serine 302 each contribute to the isopentenyl diphosphate site.

It belongs to the IspH family. The cofactor is [4Fe-4S] cluster.

It catalyses the reaction isopentenyl diphosphate + 2 oxidized [2Fe-2S]-[ferredoxin] + H2O = (2E)-4-hydroxy-3-methylbut-2-enyl diphosphate + 2 reduced [2Fe-2S]-[ferredoxin] + 2 H(+). The catalysed reaction is dimethylallyl diphosphate + 2 oxidized [2Fe-2S]-[ferredoxin] + H2O = (2E)-4-hydroxy-3-methylbut-2-enyl diphosphate + 2 reduced [2Fe-2S]-[ferredoxin] + 2 H(+). It functions in the pathway isoprenoid biosynthesis; dimethylallyl diphosphate biosynthesis; dimethylallyl diphosphate from (2E)-4-hydroxy-3-methylbutenyl diphosphate: step 1/1. The protein operates within isoprenoid biosynthesis; isopentenyl diphosphate biosynthesis via DXP pathway; isopentenyl diphosphate from 1-deoxy-D-xylulose 5-phosphate: step 6/6. Functionally, catalyzes the conversion of 1-hydroxy-2-methyl-2-(E)-butenyl 4-diphosphate (HMBPP) into a mixture of isopentenyl diphosphate (IPP) and dimethylallyl diphosphate (DMAPP). Acts in the terminal step of the DOXP/MEP pathway for isoprenoid precursor biosynthesis. This chain is 4-hydroxy-3-methylbut-2-enyl diphosphate reductase, found in Pelodictyon phaeoclathratiforme (strain DSM 5477 / BU-1).